The chain runs to 649 residues: Protein teflon (649 aa).

The segment at 33–56 (LYCHFCRDLFTQLPEFLRHLQSNH) adopts a C2H2-type 1 zinc-finger fold. The disordered stretch occupies residues 78-126 (EQGKAHEDAQSAGHNSSSGDSSSLMNSEDSRAIEGSEDNSDNSPMKPEQ). Residues 88-104 (SAGHNSSSGDSSSLMNS) show a composition bias toward low complexity. 2 consecutive C2H2-type zinc fingers follow at residues 599–621 (YFCK…LISH) and 625–648 (FQCT…RNAH).

This sequence belongs to the Teflon family. In terms of tissue distribution, expressed at a low level in a variety of tissues, highest expression is in testis.

The protein resides in the nucleus. The protein localises to the chromosome. Functionally, specifically required in males for proper segregation of autosomal bivalents at meiosis I. Expression is required in the male germ line prior to spermatocyte stage S4. May have a role as a bridging molecule maintaining adhesion to hold autosome bivalents together via heterochromatic connections. The chain is Protein teflon from Drosophila melanogaster (Fruit fly).